Reading from the N-terminus, the 266-residue chain is Glutamate racemase (266 aa).

Residues 9 to 10 (DS) and 41 to 42 (YG) each bind substrate. Cys72 (proton donor/acceptor) is an active-site residue. Residue 73–74 (NT) participates in substrate binding. Cys184 (proton donor/acceptor) is an active-site residue. 185 to 186 (TH) contacts substrate.

Belongs to the aspartate/glutamate racemases family. In terms of assembly, homodimer.

The enzyme catalyses L-glutamate = D-glutamate. The protein operates within cell wall biogenesis; peptidoglycan biosynthesis. Provides the (R)-glutamate required for cell wall biosynthesis. The protein is Glutamate racemase of Staphylococcus aureus (strain MRSA252).